A 113-amino-acid chain; its full sequence is MGRGVSVGGGQSSLGYLFGSGEAPKPAINNAPAPSSETLPISADPSPKHVAAQTVNVTKQIPAGINKSSTNNYIRADGQNTGNFLTDRPSTKVHAAPGGGSSLDYLFGGGGSN.

Gly residues predominate over residues 1 to 12 (MGRGVSVGGGQS). The tract at residues 1–50 (MGRGVSVGGGQSSLGYLFGSGEAPKPAINNAPAPSSETLPISADPSPKHV) is disordered. A compositionally biased stretch (low complexity) spans 23–34 (APKPAINNAPAP). At serine 69 the chain carries Phosphoserine. The disordered stretch occupies residues 79 to 113 (QNTGNFLTDRPSTKVHAAPGGGSSLDYLFGGGGSN). Gly residues predominate over residues 97 to 113 (PGGGSSLDYLFGGGGSN).

The protein belongs to the SPIRAL1 family. In terms of tissue distribution, detected in pollen of mature flowers.

Functionally, acts redundantly with SPR1 in maintaining the cortical microtubules organization essential for anisotropic cell growth. The sequence is that of Protein SPIRAL1-like 1 (SP1L1) from Arabidopsis thaliana (Mouse-ear cress).